The sequence spans 168 residues: Phosphopantetheine adenylyltransferase (168 aa).

Ser8 is a binding site for substrate. Residues 8 to 9 (SF) and His16 each bind ATP. Positions 40, 72, and 86 each coordinate substrate. Residues 87-89 (GLR), Glu97, and 122-128 (YSFLSSS) contribute to the ATP site.

Belongs to the bacterial CoaD family. Homohexamer. Mg(2+) serves as cofactor.

Its subcellular location is the cytoplasm. It carries out the reaction (R)-4'-phosphopantetheine + ATP + H(+) = 3'-dephospho-CoA + diphosphate. It functions in the pathway cofactor biosynthesis; coenzyme A biosynthesis; CoA from (R)-pantothenate: step 4/5. In terms of biological role, reversibly transfers an adenylyl group from ATP to 4'-phosphopantetheine, yielding dephospho-CoA (dPCoA) and pyrophosphate. The chain is Phosphopantetheine adenylyltransferase from Thermosynechococcus vestitus (strain NIES-2133 / IAM M-273 / BP-1).